Reading from the N-terminus, the 322-residue chain is Methionyl-tRNA formyltransferase (322 aa).

Residue 115–118 (SLLP) participates in (6S)-5,6,7,8-tetrahydrofolate binding.

It belongs to the Fmt family.

It carries out the reaction L-methionyl-tRNA(fMet) + (6R)-10-formyltetrahydrofolate = N-formyl-L-methionyl-tRNA(fMet) + (6S)-5,6,7,8-tetrahydrofolate + H(+). Attaches a formyl group to the free amino group of methionyl-tRNA(fMet). The formyl group appears to play a dual role in the initiator identity of N-formylmethionyl-tRNA by promoting its recognition by IF2 and preventing the misappropriation of this tRNA by the elongation apparatus. This Treponema denticola (strain ATCC 35405 / DSM 14222 / CIP 103919 / JCM 8153 / KCTC 15104) protein is Methionyl-tRNA formyltransferase.